The sequence spans 282 residues: Bifunctional protein FolD (282 aa).

Residues 165–167 and isoleucine 231 each bind NADP(+); that span reads GAS.

This sequence belongs to the tetrahydrofolate dehydrogenase/cyclohydrolase family. Homodimer.

It carries out the reaction (6R)-5,10-methylene-5,6,7,8-tetrahydrofolate + NADP(+) = (6R)-5,10-methenyltetrahydrofolate + NADPH. The enzyme catalyses (6R)-5,10-methenyltetrahydrofolate + H2O = (6R)-10-formyltetrahydrofolate + H(+). Its pathway is one-carbon metabolism; tetrahydrofolate interconversion. Catalyzes the oxidation of 5,10-methylenetetrahydrofolate to 5,10-methenyltetrahydrofolate and then the hydrolysis of 5,10-methenyltetrahydrofolate to 10-formyltetrahydrofolate. The polypeptide is Bifunctional protein FolD (Francisella tularensis subsp. holarctica (strain FTNF002-00 / FTA)).